Here is a 213-residue protein sequence, read N- to C-terminus: Large ribosomal subunit protein uL4 (213 aa).

A disordered region spans residues Thr51 to Gly90. Basic residues predominate over residues Gly63 to Arg75.

The protein belongs to the universal ribosomal protein uL4 family. As to quaternary structure, part of the 50S ribosomal subunit.

Its function is as follows. One of the primary rRNA binding proteins, this protein initially binds near the 5'-end of the 23S rRNA. It is important during the early stages of 50S assembly. It makes multiple contacts with different domains of the 23S rRNA in the assembled 50S subunit and ribosome. In terms of biological role, forms part of the polypeptide exit tunnel. In Malacoplasma penetrans (strain HF-2) (Mycoplasma penetrans), this protein is Large ribosomal subunit protein uL4.